Reading from the N-terminus, the 448-residue chain is O-Mevalon transferase yanI (448 aa).

N-linked (GlcNAc...) asparagine glycosylation occurs at Asn2. Transmembrane regions (helical) follow at residues 21-41 (VLLS…LLAV), 54-74 (YGLL…PPPP), 79-96 (AVLY…ARYF), 165-185 (FVTA…LVEV), 217-237 (LIVL…VLPL), 316-336 (MLML…SYHV), 350-370 (VKYF…CWLL), and 390-410 (IVTA…PVAL).

It belongs to the wax synthase family.

The protein localises to the membrane. It participates in secondary metabolite biosynthesis; terpenoid biosynthesis. O-Mevalon transferase yanI; part of the gene cluster that mediates the biosynthesis of yanuthone D, a fungal isoprenoid epoxycyclohexenone that acts as an antibiotic against fungi and bacteria. The first step of the pathway is the synthesis of 6-methylsalicylic acid (6-MSA) by the polyketide synthase yanA. 6-MSA is then converted to m-cresol by the decarboxylase yanB. The cytochrome P450 monooxygenase yanC then catalyzes the oxidation of m-cresol to toluquinol. Epoxidation of toluquinol is then performed by the short chain dehydrogenase yanD, with the help of yanE, and a further prenylation by yanG leads to 7-deacetoxyyanuthone A. The next step is the hydroxylation of C-22 of 7-deacetoxyyanuthone A by the cytochrome P450 monooxygenase yanH to yield 22-deacetylyanuthone A. O-Mevalon transferase yanI then attaches mevalon to the hydroxyl group of 22-deacetylyanuthone A to produce yanuthone E. Finally, the FAD-dependent monooxygenase yanF oxidizes the hydroxyl group at C15 of yanuthone E to form yanuthone D. Furthermore, several branching points in the pathway lead to the production of yanuthones F and G from 7-deacetoxyyanuthone A; yanuthones H and I from 22-deacetylyanuthone A; and yanuthone J from yanuthone E. The polypeptide is O-Mevalon transferase yanI (Aspergillus niger (strain ATCC 1015 / CBS 113.46 / FGSC A1144 / LSHB Ac4 / NCTC 3858a / NRRL 328 / USDA 3528.7)).